A 350-amino-acid chain; its full sequence is uncharacterized protein (350 aa).

The first 26 residues, 1–26 (MKKSGWLVVALIALVVLGVVTSIAVN), serve as a signal peptide directing secretion.

This is an uncharacterized protein from Archaeoglobus fulgidus (strain ATCC 49558 / DSM 4304 / JCM 9628 / NBRC 100126 / VC-16).